We begin with the raw amino-acid sequence, 387 residues long: Polyphosphate kinase (387 aa).

The Mg(2+) site is built by arginine 347 and arginine 377.

This sequence belongs to the polyphosphate kinase 1 (PPK1) family. The cofactor is Mg(2+). An intermediate of this reaction is the autophosphorylated ppk in which a phosphate is covalently linked to a histidine residue through a N-P bond.

It catalyses the reaction [phosphate](n) + ATP = [phosphate](n+1) + ADP. Its function is as follows. Catalyzes the reversible transfer of the terminal phosphate of ATP to form a long-chain polyphosphate (polyP). The protein is Polyphosphate kinase (ppk) of Aphanizomenon baltica.